Reading from the N-terminus, the 521-residue chain is Vang-like protein 2 (521 aa).

The disordered stretch occupies residues methionine 1–histidine 81. The Cytoplasmic portion of the chain corresponds to methionine 1–glycine 108. Over residues glycine 15–lysine 33 the composition is skewed to basic residues. Positions glutamate 57 to asparagine 67 are enriched in basic and acidic residues. Positions glycine 69–histidine 81 are enriched in low complexity. A helical transmembrane segment spans residues valine 109–leucine 129. The Extracellular portion of the chain corresponds to proline 130–glycine 147. A helical membrane pass occupies residues leucine 148–phenylalanine 168. At arginine 169 to valine 178 the chain is on the cytoplasmic side. A helical transmembrane segment spans residues phenylalanine 179–phenylalanine 199. Topologically, residues tyrosine 200–tyrosine 218 are extracellular. A helical transmembrane segment spans residues alanine 219–leucine 239. The Cytoplasmic portion of the chain corresponds to arginine 240–valine 521. A PDZ-binding motif is present at residues glutamate 518–valine 521.

The protein belongs to the Vang family. As to quaternary structure, interacts with dvl/dsh. Interacts with prickle3.

The protein localises to the cell membrane. In terms of biological role, has a role in non-canonical Wnt/planar cell polarity (PCP) signaling; can recruit dvl/dsh and prickle from the cytoplasm to the plasma membrane. Acts in a PCP complex to regulate the polarized assembly of fibronectrin on the surface of the mesoderm during gastrulation. Regulates convergent extension in both dorsal mesoderm and neural tissue without affecting cell fate. Regulates neural fold closure during neurulation. May be required for cell surface localization of fzd3 and fzd6 in the inner ear. The chain is Vang-like protein 2 from Xenopus tropicalis (Western clawed frog).